We begin with the raw amino-acid sequence, 764 residues long: FAST kinase domain-containing protein 5, mitochondrial (764 aa).

Phosphoserine is present on serine 95. An N6-acetyllysine modification is found at lysine 507. The 61-residue stretch at leucine 697 to glutamate 757 folds into the RAP domain.

It belongs to the FAST kinase family. As to quaternary structure, found in a complex with GRSF1, DDX28, DHX30 and FASTKD2. Associates with the 12S mitochondrial rRNA (12S mt-rRNA).

Its subcellular location is the mitochondrion matrix. The protein localises to the mitochondrion nucleoid. Functionally, plays an important role in the processing of non-canonical mitochondrial mRNA precursors. This Macaca fascicularis (Crab-eating macaque) protein is FAST kinase domain-containing protein 5, mitochondrial (FASTKD5).